We begin with the raw amino-acid sequence, 545 residues long: Tyrosine decarboxylase 2 (545 aa).

Residues 23 to 44 are compositionally biased toward gly residues; the sequence is GYTNGNGHTNGNGNYNGNGHVN. Residues 23-45 are disordered; it reads GYTNGNGHTNGNGNYNGNGHVNG. Positions 245 and 360 each coordinate L-tyrosine. Lys361 carries the N6-(pyridoxal phosphate)lysine modification. Residue Tyr390 participates in L-tyrosine binding.

Belongs to the group II decarboxylase family. Homotetramer. Pyridoxal 5'-phosphate is required as a cofactor. As to expression, expressed specifically in flowers.

Its subcellular location is the cytoplasm. The catalysed reaction is L-tyrosine + H(+) = tyramine + CO2. Its function is as follows. Converts tyrosine into tyramine, a precursor of isoquinoline alkaloids and various amides. The polypeptide is Tyrosine decarboxylase 2 (Arabidopsis thaliana (Mouse-ear cress)).